The chain runs to 218 residues: Uracil-DNA glycosylase (218 aa).

Asp-68 functions as the Proton acceptor in the catalytic mechanism.

This sequence belongs to the uracil-DNA glycosylase (UDG) superfamily. UNG family. Homodimer. Interacts with protein OPG148. Component of the Uracil-DNA glycosylase(UDG)-OPG148-polymerase complex; OPG148 and UDG form a heterodimeric processivity factor that associates with OPG71 to form the processive polymerase holoenzyme.

It catalyses the reaction Hydrolyzes single-stranded DNA or mismatched double-stranded DNA and polynucleotides, releasing free uracil.. Its function is as follows. Plays an essential role in viral replication as a component of the DNA polymerase processivity factor. Excises uracil residues from the DNA which can arise as a result of misincorporation of dUMP residues by DNA polymerase or due to deamination of cytosine. This chain is Uracil-DNA glycosylase (OPG116), found in Vaccinia virus (strain Ankara) (VACV).